Consider the following 394-residue polypeptide: Elongation factor Tu (394 aa).

Positions 10–204 (KPHVNIGTIG…AVDSWIPLPE (195 aa)) constitute a tr-type G domain. Residues 19–26 (GHVDHGKT) are G1. 19–26 (GHVDHGKT) provides a ligand contact to GTP. Residue Thr-26 participates in Mg(2+) binding. Residues 60–64 (GITIN) are G2. A G3 region spans residues 81-84 (DCPG). GTP contacts are provided by residues 81–85 (DCPGH) and 136–139 (NKCD). The G4 stretch occupies residues 136–139 (NKCD). A G5 region spans residues 174-176 (SGL).

The protein belongs to the TRAFAC class translation factor GTPase superfamily. Classic translation factor GTPase family. EF-Tu/EF-1A subfamily. As to quaternary structure, monomer.

The protein localises to the cytoplasm. The enzyme catalyses GTP + H2O = GDP + phosphate + H(+). Functionally, GTP hydrolase that promotes the GTP-dependent binding of aminoacyl-tRNA to the A-site of ribosomes during protein biosynthesis. The polypeptide is Elongation factor Tu (Ureaplasma parvum serovar 3 (strain ATCC 27815 / 27 / NCTC 11736)).